The chain runs to 111 residues: CRSMTMIRCSVAAVRARQFRFIGFSLHTFINIFFLLPLKAYALCTLSNSDWLSRGSAAKATGKGGKLDAIQDPVAASSPRESQENEAPLRRHNLARDATRSMAYDGICTDQ.

The segment at 56 to 98 is disordered; it reads SAAKATGKGGKLDAIQDPVAASSPRESQENEAPLRRHNLARDA. Over residues 81–98 the composition is skewed to basic and acidic residues; it reads ESQENEAPLRRHNLARDA.

It belongs to the NodC/HAS family.

The protein localises to the cell membrane. Its function is as follows. Involved in the synthesis of Nod factor, a sulfated N-acyl-beta-1,4-tetrasaccharide of N-acetylglucosamine which initiates a series of events in the host plant species leading eventually to nodulation. The polypeptide is N-acetylglucosaminyltransferase (nodC) (Rhizobium tropici).